A 156-amino-acid polypeptide reads, in one-letter code: Biotin carboxyl carrier protein of acetyl-CoA carboxylase (156 aa).

The 84-residue stretch at 73 to 156 (PAAAEISGHI…EFDEPLVVIE (84 aa)) folds into the Biotinyl-binding domain. An N6-biotinyllysine modification is found at Lys-122.

In terms of assembly, homodimer.

The protein operates within lipid metabolism; fatty acid biosynthesis. Functionally, this protein is a component of the acetyl coenzyme A carboxylase complex; first, biotin carboxylase catalyzes the carboxylation of the carrier protein and then the transcarboxylase transfers the carboxyl group to form malonyl-CoA. The sequence is that of Biotin carboxyl carrier protein of acetyl-CoA carboxylase (accB) from Escherichia coli O6:H1 (strain CFT073 / ATCC 700928 / UPEC).